A 428-amino-acid polypeptide reads, in one-letter code: Glutamate-1-semialdehyde 2,1-aminomutase (428 aa).

The residue at position 265 (Lys265) is an N6-(pyridoxal phosphate)lysine.

It belongs to the class-III pyridoxal-phosphate-dependent aminotransferase family. HemL subfamily. In terms of assembly, homodimer. The cofactor is pyridoxal 5'-phosphate.

The protein resides in the cytoplasm. It carries out the reaction (S)-4-amino-5-oxopentanoate = 5-aminolevulinate. It functions in the pathway porphyrin-containing compound metabolism; protoporphyrin-IX biosynthesis; 5-aminolevulinate from L-glutamyl-tRNA(Glu): step 2/2. The sequence is that of Glutamate-1-semialdehyde 2,1-aminomutase from Aeromonas salmonicida (strain A449).